A 426-amino-acid polypeptide reads, in one-letter code: Histidine--tRNA ligase (426 aa).

It belongs to the class-II aminoacyl-tRNA synthetase family.

It localises to the cytoplasm. It catalyses the reaction tRNA(His) + L-histidine + ATP = L-histidyl-tRNA(His) + AMP + diphosphate + H(+). This Saccharolobus solfataricus (strain ATCC 35092 / DSM 1617 / JCM 11322 / P2) (Sulfolobus solfataricus) protein is Histidine--tRNA ligase.